The sequence spans 611 residues: Procollagen galactosyltransferase 1-B (611 aa).

Positions 1–24 (MSQAGVERLLKGLQILVLVLRLSA) are cleaved as a signal peptide. Residues Asn85, Asn173, Asn370, Asn373, and Asn568 are each glycosylated (N-linked (GlcNAc...) asparagine). Basic and acidic residues predominate over residues 576 to 591 (DRAKSRKTHQQEKLRS). The interval 576–611 (DRAKSRKTHQQEKLRSEALNTPSMGSPFDNTARDEL) is disordered. The Prevents secretion from ER signature appears at 608 to 611 (RDEL).

The protein belongs to the glycosyltransferase 25 family.

The protein localises to the endoplasmic reticulum lumen. The enzyme catalyses (5R)-5-hydroxy-L-lysyl-[collagen] + UDP-alpha-D-galactose = (5R)-5-O-(beta-D-galactosyl)-5-hydroxy-L-lysyl-[collagen] + UDP + H(+). Beta-galactosyltransferase that transfers beta-galactose to hydroxylysine residues of type I collagen. By acting on collagen glycosylation, facilitates the formation of collagen triple helix. This Xenopus laevis (African clawed frog) protein is Procollagen galactosyltransferase 1-B (colgalt1-b).